The following is a 123-amino-acid chain: Large ribosomal subunit protein bL19 (123 aa).

This sequence belongs to the bacterial ribosomal protein bL19 family.

In terms of biological role, this protein is located at the 30S-50S ribosomal subunit interface and may play a role in the structure and function of the aminoacyl-tRNA binding site. The chain is Large ribosomal subunit protein bL19 (rplS) from Treponema pallidum (strain Nichols).